The primary structure comprises 334 residues: Leucine-rich repeat-containing protein 26 (334 aa).

Positions 1–30 (MRGSFFSRLPPQLSLLLLLLLLLSWRRVWT) are cleaved as a signal peptide. The Extracellular portion of the chain corresponds to 31–265 (QEHIGTDPSK…QCTQSLAARD (235 aa)). An LRRNT domain is found at 38–75 (PSKSPVAPVCPEACSCSPGGKANCSALALPAVPAGLSW). 2 disulfides stabilise this stretch: C47–C53 and C51–C61. LRR repeat units lie at residues 76-97 (QVRS…AFAD), 100-121 (ALLY…AFWG), 124-145 (VLQR…TFTP), 148-169 (ALSF…ILGP), and 172-194 (LLRV…LNSL). Residues 205-259 (NPWACSCALRPLCTWLRKHPRPTSETETLLCVSPKLQTLNLLTDFPDNAFKQCTQ) enclose the LRRCT domain. 2 disulfides stabilise this stretch: C209–C235 and C211–C257. Residues 266–286 (LAVVYALGPASFLASLAICLA) traverse the membrane as a helical segment. The Cytoplasmic portion of the chain corresponds to 287–334 (LGSVLTACGARRRRRRTTVRHLIRRQPDPEGPASLEDVGSPTTTAIQA). A disordered region spans residues 312–334 (QPDPEGPASLEDVGSPTTTAIQA).

In terms of assembly, interacts with KCNMA1.

It localises to the cell membrane. It is found in the cytoplasm. Its subcellular location is the cytoskeleton. Its function is as follows. Auxiliary protein of the large-conductance, voltage and calcium-activated potassium channel (BK alpha). Required for the conversion of BK alpha channels from a high-voltage to a low-voltage activated channel type in non-excitable cells. These are characterized by negative membrane voltages and constant low levels of calcium. The protein is Leucine-rich repeat-containing protein 26 (Lrrc26) of Rattus norvegicus (Rat).